The chain runs to 417 residues: Hydrogen cyanide synthase subunit HcnC (417 aa).

The signal sequence occupies residues methionine 1–serine 18. Valine 7 to tyrosine 21 is a binding site for FAD. The N-palmitoyl cysteine moiety is linked to residue cysteine 19. Cysteine 19 carries the S-diacylglycerol cysteine lipid modification. Residues serine 46–phenylalanine 66 form a helical membrane-spanning segment.

The protein belongs to the FAD-dependent glycerol-3-phosphate dehydrogenase family. Heterotrimer of HcnA, HcnB and HcnC.

It is found in the cell membrane. It catalyses the reaction glycine + 2 A = hydrogen cyanide + 2 AH2 + CO2. A three-component membrane-bound flavoenzyme that catalyzes the formation of hydrogen cyanide, a secondary metabolite, by transfer of electrons to a cyanide-resistant branch of the aerobic respiratory chain. Contributes to suppression of black root rot of tobacco. This Pseudomonas protegens (strain DSM 19095 / LMG 27888 / CFBP 6595 / CHA0) protein is Hydrogen cyanide synthase subunit HcnC.